A 123-amino-acid polypeptide reads, in one-letter code: MPTIQQLIRNTRQPTQNRTKSPALKACPQRRGVCTRVYTTTPKKPNSALRKVARVRLTSGFEVTAYIPGIGHNLQEHSVVLIRGGRVKDLPGVRYHIIRGTLDAVGVKDRHQGRSKYGVKRPK.

A compositionally biased stretch (polar residues) spans 1 to 20 (MPTIQQLIRNTRQPTQNRTK). A disordered region spans residues 1 to 27 (MPTIQQLIRNTRQPTQNRTKSPALKAC).

It belongs to the universal ribosomal protein uS12 family. In terms of assembly, part of the 30S ribosomal subunit.

It is found in the plastid. Its subcellular location is the chloroplast. With S4 and S5 plays an important role in translational accuracy. Located at the interface of the 30S and 50S subunits. In Zygnema circumcarinatum (Green alga), this protein is Small ribosomal subunit protein uS12c (rps12).